A 343-amino-acid polypeptide reads, in one-letter code: Pentatricopeptide repeat-containing protein At1g06270 (343 aa).

PPR repeat units follow at residues 98 to 133, 134 to 169, 170 to 204, 205 to 240, 241 to 275, and 276 to 310; these read PKIVYSSLLTYCLQSSDPLPLSFAILQRTLRSGCLP, NPQTHLLLSDAWLERRRGSQSVADIINEMKLIGYSP, DTGTCNYLVSSLCAVDKLDEAIKVVEEMSAAGCIP, DVESYGAVINSLCLARKTTDVVKIVKEMVSKAGISP, RKGMLTKVAAALRANREIWKAIEMIEFVESRDYPV, and EFESYEVVVEGCLEVREYILAGKVVMRMTDRGFIP.

It belongs to the PPR family. P subfamily.

The protein is Pentatricopeptide repeat-containing protein At1g06270 of Arabidopsis thaliana (Mouse-ear cress).